Here is a 284-residue protein sequence, read N- to C-terminus: Aliphatic sulfonates import ATP-binding protein SsuB (284 aa).

The ABC transporter domain occupies 21–242 (LRIAHAVKRY…HRGAPAFARL (222 aa)). 53-60 (GRSGCGKS) is an ATP binding site.

The protein belongs to the ABC transporter superfamily. Aliphatic sulfonates importer (TC 3.A.1.17.2) family. As to quaternary structure, the complex is composed of two ATP-binding proteins (SsuB), two transmembrane proteins (SsuC) and a solute-binding protein (SsuA).

The protein localises to the cell inner membrane. The enzyme catalyses ATP + H2O + aliphatic sulfonate-[sulfonate-binding protein]Side 1 = ADP + phosphate + aliphatic sulfonateSide 2 + [sulfonate-binding protein]Side 1.. In terms of biological role, part of the ABC transporter complex SsuABC involved in aliphatic sulfonates import. Responsible for energy coupling to the transport system. This is Aliphatic sulfonates import ATP-binding protein SsuB from Ralstonia nicotianae (strain ATCC BAA-1114 / GMI1000) (Ralstonia solanacearum).